A 156-amino-acid chain; its full sequence is Ribosomal RNA large subunit methyltransferase H (156 aa).

Residues L73, G104, and 123 to 128 each bind S-adenosyl-L-methionine; that span reads IGPLTL.

It belongs to the RNA methyltransferase RlmH family. In terms of assembly, homodimer.

The protein resides in the cytoplasm. It catalyses the reaction pseudouridine(1915) in 23S rRNA + S-adenosyl-L-methionine = N(3)-methylpseudouridine(1915) in 23S rRNA + S-adenosyl-L-homocysteine + H(+). In terms of biological role, specifically methylates the pseudouridine at position 1915 (m3Psi1915) in 23S rRNA. This is Ribosomal RNA large subunit methyltransferase H from Xanthomonas campestris pv. campestris (strain 8004).